The chain runs to 207 residues: Small ribosomal subunit protein uS4 (207 aa).

Residues 29–38 (QDKAKFDSKP) are compositionally biased toward basic and acidic residues. Residues 29 to 54 (QDKAKFDSKPGQHGRTSGQRTSDYGL) form a disordered region. A compositionally biased stretch (polar residues) spans 42–52 (GRTSGQRTSDY). The 64-residue stretch at 97 to 160 (SRLDNVVYRM…KKQTRIAEAL (64 aa)) folds into the S4 RNA-binding domain.

Belongs to the universal ribosomal protein uS4 family. As to quaternary structure, part of the 30S ribosomal subunit. Contacts protein S5. The interaction surface between S4 and S5 is involved in control of translational fidelity.

Its function is as follows. One of the primary rRNA binding proteins, it binds directly to 16S rRNA where it nucleates assembly of the body of the 30S subunit. Functionally, with S5 and S12 plays an important role in translational accuracy. This Variovorax paradoxus (strain S110) protein is Small ribosomal subunit protein uS4.